Consider the following 1381-residue polypeptide: MEDVFSYFEKPKDPIRFNAIKISIASPDKILSWSYGEVKKPETINYRTFKPERDGLFCAKIFGPVKDYECLCGRYKRMKHRGVVCEKCGVEVIKSKVRRERMGHITLATPVAHIWFLKSLPSRIGNVLDLTLKELERILYFESWIVLDPRNTPLRKKDLLSDEEYNDLREQYGPDGFQAGIGAEAVRKLLEEVDLEGLDVELRDELKTASSDTKRKKVIKRLKVIEALRKSGNRPEWMILTVLPVIPPDLRPLVPLDGGRFATSDLNDLYRRVINRNNRLKRLQELNAPEIIIRNEKRMLQEAVDVLFDNGRRGRAITGTNKRPLKSLSDMLKGKQGRFRQNLLGKRVDYSGRSVITVGPDLRLHQCGLPKKMALELFKPFVYNRLQEKGYVTTVKSAKKMVERETAEVWDALDEVVREYPVMLNRAPTLHRLGLQAFEPVLIEGKAIQLHPLVCTAFNADFDGDQMAVHVPLSIEAQTEARVLMMSTNNILSPANGKPIIIPSQDVVLGIYYLTRSKEDVLGHGMSFSNPEEVRSAFDAGAVELRARIKVRIDDELKETTVGRVILYEIIPEAISFDVINKVMNKKELANLIDYCYRLCGEKTTVILADRLKDMGFKYATHSGMSFAVRNLNIPKNKKDIVVRADRDVLEIQKQYMDGLITDGERYNKVIDLWAQATEKIASEMMGGIETEEQITTEGKKVVESFNPIYMMADSGARGSNAQIRQLAGMRGLMAKPSGEIIETPITANFREGLTVLQYFISTHGARKGLADTALKTANSGYLTRRLVDVAQDCIITQQDCGTVDGISVSALMEGGEIIETAGERVLGRVVLEDIMDPFTGEVLVGANQEIDESLSEKIDRAGIESVRIRSVLTCKAKYGVCARCYGRDLGHGHLVNIGEAVGIIAAQSIGEPGTQLTMRTFHIGGTAKFEEHSTLDSRHDGIVKYVDLNYVVSKIGETVVMSRHGEIHVLDEQLRSRGKYTVPYGAHLKVKDGQSVKRGDRMAEWDPFSIPILAEVDGTVKFGDIIEGKTMQEQVDEVTGLSRKVIVEFKGADLRPRVSLKDATGKTAKVPGTNAAARHLLSVGVNIVVSEGDQVKAGDIIAKIPRETTKTKDITGGLPRVAELFEARKPKDFAVISEIDGVVSYGKDAKGKRKVIVTPEIGDEKEYLIPKGKHVSVQEGDRVIAGEALMSGVNNPHDLLMIKGEKALARYLVDEVQEVYRLQGVKINDKHMEVIVRQMLRRVKVIDPGDTPFMADEQVEKFRFQEENEKAIARGEQPAIGEPVLLGITKASLSTQSFISAASFQETTRVLTEASLAGKVDYLRGLKENVIMGRLIPAGTGLVMYRKLGIKTVADEDAESVEIEGDENSNKKSLDMHAAN.

Zn(2+) is bound by residues cysteine 70, cysteine 72, cysteine 85, and cysteine 88. Mg(2+)-binding residues include aspartate 461, aspartate 463, and aspartate 465. Zn(2+)-binding residues include cysteine 801, cysteine 875, cysteine 882, and cysteine 885. Positions 1362–1381 (VEIEGDENSNKKSLDMHAAN) are disordered. Residues 1369–1381 (NSNKKSLDMHAAN) show a composition bias toward basic and acidic residues.

The protein belongs to the RNA polymerase beta' chain family. As to quaternary structure, the RNAP catalytic core consists of 2 alpha, 1 beta, 1 beta' and 1 omega subunit. When a sigma factor is associated with the core the holoenzyme is formed, which can initiate transcription. It depends on Mg(2+) as a cofactor. Zn(2+) is required as a cofactor.

It carries out the reaction RNA(n) + a ribonucleoside 5'-triphosphate = RNA(n+1) + diphosphate. Functionally, DNA-dependent RNA polymerase catalyzes the transcription of DNA into RNA using the four ribonucleoside triphosphates as substrates. In Syntrophus aciditrophicus (strain SB), this protein is DNA-directed RNA polymerase subunit beta'.